We begin with the raw amino-acid sequence, 462 residues long: Microspherule protein 1 (462 aa).

Residue methionine 1 is modified to N-acetylmethionine. Residues 1-130 (MDKDSQGLLD…KSKQPLQVTK (130 aa)) are disordered. Residue serine 22 is modified to Phosphoserine. Positions 43–55 (PKRRSSSRFIKRK) are enriched in basic residues. Residue serine 102 is modified to Phosphoserine. Residue threonine 103 is modified to Phosphothreonine. Positions 103–112 (TPVPPSPAPA) are enriched in pro residues. Position 108 is a phosphoserine (serine 108). The short motif at 113 to 123 (PGLTKRVKKSK) is the Nuclear localization signal element. Residues lysine 123 and lysine 130 each carry the N6-acetyllysine modification. Position 282 is a phosphoserine (serine 282). Positions 301 to 335 (LEHELMVADRRQKREIRQLEQELHKWQVLVDSITG) form a coiled coil. An FHA domain is found at 363–419 (ITLGRATKDNQIDVDLSLEGPAWKISRKQGVIKLKNNGDFFIANEGRRPIYIDGRPV). The short motif at 389–396 (RKQGVIKL) is the UBR5-degron element.

As to quaternary structure, component of the chromatin remodeling INO80 complex; specifically part of a complex module associated with the N-terminus of INO80. Component of some MLL1/MLL complex, at least composed of the core components KMT2A/MLL1, ASH2L, HCFC1, WDR5 and RBBP5, as well as the facultative components BACC1, CHD8, E2F6, HSP70, INO80C, KANSL1, LAS1L, MAX, MCRS1, MGA, KAT8/MOF, PELP1, PHF20, PRP31, RING2, RUVB1/TIP49A, RUVB2/TIP49B, SENP3, TAF1, TAF4, TAF6, TAF7, TAF9 and TEX10. Component of the NSL complex at least composed of MOF/KAT8, KANSL1, KANSL2, KANSL3, MCRS1, PHF20, OGT1/OGT, WDR5 and HCFC1. Interacts with NOP2. Interacts with PINX1. Interacts with TERT. Interacts with CCDC85B. Interacts with DAXX. Interacts (via N-terminus) with FMR1 (via phosphorylated form). Interacts with FXR1 and FXR2. Interacts (via C-terminus) with NDE1 (via C-terminus); phosphorylation of NDE1 inhibits the interaction. Interacts (via C-terminus) with ZNF375. Interacts (via C-terminus) with active GTP-bound RHEB (via N-terminus) under conditions of high amino acid concentration; the interaction promotes mTORC1 complex activation by RHEB. Interacts (via N-terminus) with the mTORC1 complex; the interaction ensures mTORC1 activation by RHEB. Interacts with DYNC1I1; the interaction is required for the proper distribution of centriolar satellites. Interacts with TTBK2; the interaction is required for recruitment of TTBK2 to the mother centriole. Interacts with KIF2A; the interaction occurs during mitosis and facilitates chromosome alignment. In terms of assembly, (Microbial infection) Interacts with Herpes simplex virus ICP22. Ubiquitinated by UBR5 when not assembled in the INO80 complex, leading to its degradation: UBR5 recognizes and binds a degron that is not accessible when MCRS1 is part of the INO80 complex. In terms of processing, phosphorylated by AURKA on Ser-35 and/or Ser-36 during mitosis which is required for kinetochore fiber assembly and mitotic progression but not for spindle localization or for chromosome-induced microtuble aster formation. Also phosphorylated by AURKA on Ser-85 and/or Ser-87. Phosphorylated by TTK/MPS1 which enhances recruitment of KIF2A to the minus end of spindle microtubules and facilitates precise chromosome segregation. Detected in testis, and at lower levels in spleen, thymus, prostate, uterus, small intestine, colon and leukocytes.

Its subcellular location is the nucleus. The protein resides in the nucleolus. It localises to the cytoplasm. It is found in the cytoskeleton. The protein localises to the microtubule organizing center. Its subcellular location is the centrosome. The protein resides in the spindle pole. It localises to the chromosome. It is found in the centromere. The protein localises to the kinetochore. Its subcellular location is the lysosome. The protein resides in the centriolar satellite. In terms of biological role, modulates the transcription repressor activity of DAXX by recruiting it to the nucleolus. As part of the NSL complex, may be involved in acetylation of nucleosomal histone H4 on several lysine residues. Putative regulatory component of the chromatin remodeling INO80 complex which is involved in transcriptional regulation, DNA replication and probably DNA repair. May also be an inhibitor of TERT telomerase activity. Binds to G-quadruplex structures in mRNA. Binds to RNA homomer poly(G) and poly(U). Maintains RHEB at the lysosome in its active GTP-bound form and prevents its interaction with the mTORC1 complex inhibitor TSC2, ensuring activation of the mTORC1 complex by RHEB. Stabilizes the minus ends of kinetochore fibers by protecting them from depolymerization, ensuring functional spindle assembly during mitosis. Following phosphorylation by TTK/MPS1, enhances recruitment of KIF2A to the minus ends of mitotic spindle microtubules which promotes chromosome alignment. Regulates the morphology of microtubule minus ends in mitotic spindle by maintaining them in a closed conformation characterized by the presence of an electron-dense cap. Regulates G2/M transition and spindle assembly during oocyte meiosis. Mediates histone modifications and transcriptional regulation in germinal vesicle oocytes which are required for meiotic progression. Also regulates microtubule nucleation and spindle assembly by activating aurora kinases during oocyte meiosis. Contributes to the establishment of centriolar satellites and also plays a role in primary cilium formation by recruiting TTBK2 to the mother centriole which is necessary for removal of the CP110 cap from the mother centriole, an early step in ciliogenesis. Required for epiblast development during early embryogenesis. Essential for cell viability. The chain is Microspherule protein 1 (MCRS1) from Homo sapiens (Human).